A 465-amino-acid chain; its full sequence is Cysteine--tRNA ligase (465 aa).

A Zn(2+)-binding site is contributed by Cys-27. The 'HIGH' region motif lies at 29-39 (PTVYDFIHIGN). Residues Cys-207, His-232, and Glu-236 each contribute to the Zn(2+) site. The short motif at 264–268 (KMSKS) is the 'KMSKS' region element. Lys-267 contacts ATP.

It belongs to the class-I aminoacyl-tRNA synthetase family. In terms of assembly, monomer. Zn(2+) is required as a cofactor.

It localises to the cytoplasm. It catalyses the reaction tRNA(Cys) + L-cysteine + ATP = L-cysteinyl-tRNA(Cys) + AMP + diphosphate. The chain is Cysteine--tRNA ligase from Caldicellulosiruptor saccharolyticus (strain ATCC 43494 / DSM 8903 / Tp8T 6331).